Reading from the N-terminus, the 196-residue chain is Chromophore lyase CpcT/CpeT (196 aa).

The protein belongs to the CpcT/CpeT biliprotein lyase family.

In terms of biological role, covalently attaches a chromophore to Cys residue(s) of phycobiliproteins. This is Chromophore lyase CpcT/CpeT from Synechococcus sp. (strain WH8020).